The sequence spans 442 residues: ORC1-type DNA replication protein 8 (442 aa).

ATP-binding positions include Val66–Ala70 and Tyr218.

It belongs to the CDC6/cdc18 family.

In terms of biological role, involved in regulation of DNA replication. The protein is ORC1-type DNA replication protein 8 (cdc6h) of Haloarcula marismortui (strain ATCC 43049 / DSM 3752 / JCM 8966 / VKM B-1809) (Halobacterium marismortui).